The sequence spans 71 residues: Translation initiation factor IF-1 (71 aa).

The S1-like domain maps to 1–71 (MSKDDLIQFT…LTKGRVIHRH (71 aa)).

The protein belongs to the IF-1 family. Component of the 30S ribosomal translation pre-initiation complex which assembles on the 30S ribosome in the order IF-2 and IF-3, IF-1 and N-formylmethionyl-tRNA(fMet); mRNA recruitment can occur at any time during PIC assembly.

The protein resides in the cytoplasm. One of the essential components for the initiation of protein synthesis. Stabilizes the binding of IF-2 and IF-3 on the 30S subunit to which N-formylmethionyl-tRNA(fMet) subsequently binds. Helps modulate mRNA selection, yielding the 30S pre-initiation complex (PIC). Upon addition of the 50S ribosomal subunit IF-1, IF-2 and IF-3 are released leaving the mature 70S translation initiation complex. This is Translation initiation factor IF-1 from Rickettsia felis (strain ATCC VR-1525 / URRWXCal2) (Rickettsia azadi).